Reading from the N-terminus, the 431-residue chain is MYRTKVGLKDRQQLYKLIISQLLYDGYISIANGLINEIKPQSVCAPSEQLLHLIKLGMENDDTAVQYAIGRSDTVAPGTGIDLEFDADVQTMSPEASEYETCYVTSHKGPCRVATYSRDGQLIATGSADASIKILDTERMLAKSAMPIEVMMNETAQQNMENHPVIRTLYDHVDEVTCLAFHPTEQILASGSRDYTLKLFDYSKPSAKRAFKYIQEAEMLRSISFHPSGDFILVGTQHPTLRLYDINTFQCFVSCNPQDQHTDAICSVNYNPSANMYVTGSKDGCIKLWDGVSNRCITTFEKAHDGAEVCSAIFSKNSKYILSSGKDSVAKLWEISTGRTLVRYTGAGLSGRQVHRTQAVFNHTEDYILLPDERTISLCCWDSRTAERRNLLSLGHNNIVRCIVHSPTNPGFMTCSDDFRARFWYRRSTTD.

6 WD repeats span residues 106-145 (SHKG…AKSA), 171-210 (DHVD…AKRA), 215-254 (QEAE…CFVS), 260-301 (QHTD…TTFE), 303-343 (AHDG…TLVR), and 395-431 (GHNN…STTD).

As to quaternary structure, homodimer. The CSTF complex is composed of CSTF1 (50 kDa subunit), CSTF2 (64 kDa subunit) and CSTF3 (77 kDa subunit). Interacts (via repeats WD) directly with CSTF3. Interacts (via repeat WD6) with BARD1. Interacts with ERCC6.

The protein localises to the nucleus. One of the multiple factors required for polyadenylation and 3'-end cleavage of mammalian pre-mRNAs. May be responsible for the interaction of CSTF with other factors to form a stable complex on the pre-mRNA. This Mus musculus (Mouse) protein is Cleavage stimulation factor subunit 1 (Cstf1).